A 512-amino-acid chain; its full sequence is Maturase K (512 aa).

Belongs to the intron maturase 2 family. MatK subfamily.

Its subcellular location is the plastid. It is found in the chloroplast. Usually encoded in the trnK tRNA gene intron. Probably assists in splicing its own and other chloroplast group II introns. In Amorphophallus abyssinicus (Black arum), this protein is Maturase K.